The chain runs to 1377 residues: DNA-directed RNA polymerase subunit beta (1377 aa).

This sequence belongs to the RNA polymerase beta chain family. In terms of assembly, the RNAP catalytic core consists of 2 alpha, 1 beta, 1 beta' and 1 omega subunit. When a sigma factor is associated with the core the holoenzyme is formed, which can initiate transcription.

It catalyses the reaction RNA(n) + a ribonucleoside 5'-triphosphate = RNA(n+1) + diphosphate. DNA-dependent RNA polymerase catalyzes the transcription of DNA into RNA using the four ribonucleoside triphosphates as substrates. This chain is DNA-directed RNA polymerase subunit beta, found in Brucella melitensis biotype 2 (strain ATCC 23457).